Consider the following 915-residue polypeptide: Metabotropic glutamate receptor 7 (915 aa).

Residues 1-34 (MVQLGKLLRVLTLMKFPCCVLEVLLCVLAAAARG) form the signal peptide. At 35–590 (QEMYAPHSIR…IIKLEWHSPW (556 aa)) the chain is on the extracellular side. The cysteines at positions 67 and 109 are disulfide-linked. Asn-98 carries an N-linked (GlcNAc...) asparagine glycan. L-glutamate contacts are provided by residues Ser-159, 180 to 182 (AST), Tyr-230, and Asp-314. Intrachain disulfides connect Cys-249-Cys-541, Cys-374-Cys-390, Cys-430-Cys-437, Cys-523-Cys-542, Cys-527-Cys-545, Cys-548-Cys-560, and Cys-563-Cys-576. Lys-407 serves as a coordination point for L-glutamate. N-linked (GlcNAc...) asparagine glycans are attached at residues Asn-458 and Asn-486. Asn-572 is a glycosylation site (N-linked (GlcNAc...) asparagine). The helical transmembrane segment at 591–615 (AVIPVFLAMLGIIATIFVMATFIRY) threads the bilayer. Residues 616–627 (NDTPIVRASGRE) lie on the Cytoplasmic side of the membrane. A helical membrane pass occupies residues 628 to 648 (LSYVLLTGIFLCYIITFLMIA). At 649-654 (KPDVAV) the chain is on the extracellular side. The helical transmembrane segment at 655–675 (CSFRRVFLGLGMCISYAALLT) threads the bilayer. Residues 676–702 (KTNRIYRIFEQGKKSVTAPRLISPTSQ) are Cytoplasmic-facing. A helical transmembrane segment spans residues 703-723 (LAITSSLISVQLLGVFIWFGV). Residues 724-753 (DPPNIIIDYDEHKTMNPEQARGVLKCDITD) are Extracellular-facing. A helical membrane pass occupies residues 754 to 775 (LQIICSLGYSILLMVTCTVYAI). The Cytoplasmic portion of the chain corresponds to 776–788 (KTRGVPENFNEAK). A helical transmembrane segment spans residues 789–810 (PIGFTMYTTCIVWLAFIPIFFG). Residues 811-825 (TAQSAEKLYIQTTTL) lie on the Extracellular side of the membrane. A helical membrane pass occupies residues 826 to 850 (TISMNLSASVALGMLYMPKVYIIIF). Over 851-915 (HPELNVQKRK…KYVSYNNLVI (65 aa)) the chain is Cytoplasmic. Residues 874 to 895 (SRLSHKPSDRPNGEAKTELCEN) form a disordered region. Residues 879–892 (KPSDRPNGEAKTEL) show a composition bias toward basic and acidic residues. A Phosphoserine modification is found at Ser-900.

The protein belongs to the G-protein coupled receptor 3 family. As to quaternary structure, homodimer. Interacts with PICK1. In terms of tissue distribution, widely distributed throughout the brain.

It localises to the cell membrane. Functionally, G-protein coupled receptor activated by glutamate that regulates axon outgrowth through the MAPK-cAMP-PKA signaling pathway during neuronal development. Ligand binding causes a conformation change that triggers signaling via guanine nucleotide-binding proteins (G proteins) and modulates the activity of downstream effectors, such as adenylate cyclase that it inhibits. This Rattus norvegicus (Rat) protein is Metabotropic glutamate receptor 7 (Grm7).